Reading from the N-terminus, the 87-residue chain is Putative RNase MJ1548 (87 aa).

Catalysis depends on residues Arg-65 and His-70. The RX(4)HXY motif signature appears at 65 to 72 (RNAIVHKY). Position 72 is an O-di-AMP-tyrosine (Tyr-72).

This sequence belongs to the HepT RNase toxin family. In terms of assembly, homodimer, probably forms a complex with cognate antitoxin MJ1547. Post-translationally, modified by cognate antitoxin MJ1547; probably at least 2 successive AMPylation events occur on Tyr-72.

Its function is as follows. Probable toxic component of a putative type VII toxin-antitoxin (TA) system, probably an RNase. Probably neutralized by cognate antitoxin MJ1547. Neutralization may be due to AMPylation by antitoxin MJ1547. This is Putative RNase MJ1548 from Methanocaldococcus jannaschii (strain ATCC 43067 / DSM 2661 / JAL-1 / JCM 10045 / NBRC 100440) (Methanococcus jannaschii).